Consider the following 154-residue polypeptide: Protein X (154 aa).

Residues 28–50 (RPLPGPLGAVPPSSPSAVPADDG) are disordered. Low complexity predominate over residues 33-48 (PLGAVPPSSPSAVPAD). The mitochondrial targeting sequence stretch occupies residues 68 to 117 (PCALRFTSARRMETTVNAPWSLPTVLHKRTLGLSGWSMTWIEEYIKDCVF).

The protein belongs to the orthohepadnavirus protein X family. As to quaternary structure, may form homodimer. May interact with host CEBPA, CFLAR, CREB1, DDB1, E4F1, HBXIP, HSPD1/HSP60, NFKBIA, POLR2E and SMAD4. Interacts with host SMC5-SMC6 complex and induces its degradation. Interacts with host TRPC4AP; leading to prevent ubiquitination of TRPC4AP. Interacts with host PLSCR1; this interaction promotes ubiquitination and degradation of HBx and impairs HBx-mediated cell proliferation. Post-translationally, a fraction may be phosphorylated in insect cells and HepG2 cells, a human hepatoblastoma cell line. Phosphorylated in vitro by host protein kinase C or mitogen-activated protein kinase. N-acetylated in insect cells.

It is found in the host cytoplasm. It localises to the host nucleus. The protein localises to the host mitochondrion. Functionally, multifunctional protein that plays a role in silencing host antiviral defenses and promoting viral transcription. Does not seem to be essential for HBV infection. May be directly involved in development of cirrhosis and liver cancer (hepatocellular carcinoma). Most of cytosolic activities involve modulation of cytosolic calcium. The effect on apoptosis is controversial depending on the cell types in which the studies have been conducted. May induce apoptosis by localizing in mitochondria and causing loss of mitochondrial membrane potential. May also modulate apoptosis by binding host CFLAR, a key regulator of the death-inducing signaling complex (DISC). Promotes viral transcription by using the host E3 ubiquitin ligase DDB1 to target the SMC5-SMC6 complex to proteasomal degradation. This host complex would otherwise bind to viral episomal DNA, and prevents its transcription. Moderately stimulates transcription of many different viral and cellular transcription elements. Promoters and enhancers stimulated by HBx contain DNA binding sites for NF-kappa-B, AP-1, AP-2, c-EBP, ATF/CREB, or the calcium-activated factor NF-AT. The sequence is that of Protein X from Homo sapiens (Human).